Here is a 466-residue protein sequence, read N- to C-terminus: Triplex capsid protein 1 (466 aa).

The disordered stretch occupies residues 1-29; sequence MKTKPLPTAPMAWAESAVETTTSPRELAG.

The protein belongs to the herpesviridae TRX1 protein family. Interacts with TRX2, MCP and capsid vertex component 2/CVC2.

It localises to the virion. The protein localises to the host nucleus. Structural component of the T=16 icosahedral capsid. The capsid is composed of pentamers and hexamers of major capsid protein/MCP, which are linked together by heterotrimers called triplexes. These triplexes are formed by a single molecule of triplex protein 1/TRX1 and two copies of triplex protein 2/TRX2. Additionally, TRX1 is required for efficient transport of TRX2 to the nucleus, which is the site of capsid assembly. This chain is Triplex capsid protein 1, found in Homo sapiens (Human).